A 1042-amino-acid polypeptide reads, in one-letter code: Atrial natriuretic peptide-converting enzyme (1042 aa).

Residues 1–25 (MKQSPALAPEERCRRAGSPKPVLRA) are disordered. Over 1 to 45 (MKQSPALAPEERCRRAGSPKPVLRADDNNMGNGCSQKLATANLLR) the chain is Cytoplasmic. A DDNN motif motif is present at residues 26-29 (DDNN). The helical; Signal-anchor for type II membrane protein transmembrane segment at 46–66 (FLLLVLIPCICALVLLLVILL) threads the bilayer. Over 67 to 1042 (SYVGTLQKVY…QIYIQTFLLN (976 aa)) the chain is Extracellular. Asn-80, Asn-104, Asn-135, and Asn-141 each carry an N-linked (GlcNAc...) asparagine glycan. Positions 134–259 (RNTSACMNIT…SNVSRICFSP (126 aa)) constitute an FZ 1 domain. Cystine bridges form between Cys-139-Cys-199, Cys-147-Cys-192, Cys-183-Cys-223, Cys-212-Cys-256, Cys-216-Cys-240, Cys-269-Cys-282, Cys-277-Cys-295, and Cys-289-Cys-304. 3 N-linked (GlcNAc...) asparagine glycosylation sites follow: Asn-231, Asn-245, and Asn-251. 4 LDL-receptor class A domains span residues 268–304 (LCGRGENFLCASGICIPGKLQCNGYNDCDDWSDEAHC), 305–340 (NCSENLFHCHTGKCLNYSLVCDGYDDCGDLSDEQNC), 341–377 (DCNPTTEHRCGDGRCIAMEWVCDGDHDCVDKSDEVNC), and 378–415 (SCHSQGLVECRNGQCIPSTFQCDGDEDCKDGSDEENCS). N-linked (GlcNAc...) asparagine glycosylation occurs at Asn-305. 9 disulfides stabilise this stretch: Cys-306–Cys-318, Cys-313–Cys-331, Cys-325–Cys-340, Cys-342–Cys-355, Cys-350–Cys-368, Cys-362–Cys-377, Cys-379–Cys-392, Cys-387–Cys-405, and Cys-399–Cys-414. Asn-320 is a glycosylation site (N-linked (GlcNAc...) asparagine). N-linked (GlcNAc...) asparagine glycosylation is present at Asn-376. N-linked (GlcNAc...) asparagine glycosylation is found at Asn-413, Asn-446, Asn-451, and Asn-469. The region spanning 450–573 (NNCSQCEPIT…NSDNQTCLMP (124 aa)) is the FZ 2 domain. Cystine bridges form between Cys-455/Cys-518, Cys-463/Cys-511, Cys-502/Cys-540, Cys-529/Cys-570, Cys-533/Cys-557, Cys-580/Cys-592, Cys-587/Cys-605, Cys-599/Cys-614, Cys-616/Cys-630, Cys-624/Cys-643, Cys-637/Cys-652, Cys-655/Cys-667, Cys-662/Cys-680, and Cys-674/Cys-689. A glycan (N-linked (GlcNAc...) asparagine) is linked at Asn-567. LDL-receptor class A domains are found at residues 579-614 (ECSPSHFKCRSGQCVLASRRCDGQADCDDDSDEENC), 615-653 (GCKERDLWECPSNKQCLKHTVICDGFPDCPDYMDEKNCS), and 654-689 (FCQDDELECANHACVSRDLWCDGEADCSDSSDEWDC). A glycan (N-linked (GlcNAc...) asparagine) is linked at Asn-651. The SRCR domain maps to 690 to 801 (VTLSINVNSS…RRPAARMNKR (112 aa)). N-linked (GlcNAc...) asparagine glycans are attached at residues Asn-697 and Asn-761. Cystine bridges form between Cys-790–Cys-912, Cys-828–Cys-844, Cys-926–Cys-991, Cys-955–Cys-970, and Cys-981–Cys-1010. Residues 802 to 1035 (ILGGRTSRPG…FVEWIKRQIY (234 aa)) enclose the Peptidase S1 domain. Catalysis depends on charge relay system residues His-843 and Asp-892. Residue Ser-985 is the Charge relay system of the active site. N-linked (GlcNAc...) asparagine glycosylation is present at Asn-1022.

Belongs to the peptidase S1 family. Post-translationally, N-glycosylated; required for processing and activation. In terms of processing, activated through proteolytic processing by a trypsin-like protease; cleaved into a N-terminal propeptide and an activated corin protease fragment. Different soluble forms are produced by cleavage and autocatalytic cleavage: Atrial natriuretic peptide-converting enzyme, 180 kDa soluble fragment is produced by cleavage by ADAM10, while 160 kDa and 100 kDa soluble fragments are produced by autocatalytic cleavage. Cleavage by ADAM10 to produce soluble 180 kDa soluble fragment takes place after the transmembrane region and before FZ 1. A disulfide bond links the activated corin protease fragment and the N-terminal propeptide. The disulfide bond also links the activated corin protease fragment with soluble fragments (100 kDa, 160 kDa and 180 kDa fragments). As to expression, highly expressed in heart. Expressed in heart myocytes. Also expressed in pregnant uterus. Detected in blood, in plasma as well as in serum (at protein level).

It localises to the cell membrane. It is found in the secreted. With respect to regulation, inhibited in a dose-dependent manner by non-specific trypsin-like serine protease inhibitors including benzamidine. In terms of biological role, serine-type endopeptidase involved in atrial natriuretic peptide (NPPA) and brain natriuretic peptide (NPPB) processing. Converts through proteolytic cleavage the non-functional propeptides NPPA and NPPB into their active hormones, ANP and BNP(1-32) respectively, thereby regulating blood pressure in the heart and promoting natriuresis, diuresis and vasodilation. Proteolytic cleavage of pro-NPPA also plays a role in female pregnancy by promoting trophoblast invasion and spiral artery remodeling in uterus. Also acts as a regulator of sodium reabsorption in kidney. Functionally, has weaker endopeptidase activity compared to isoform 1. The protein is Atrial natriuretic peptide-converting enzyme (CORIN) of Homo sapiens (Human).